The following is a 241-amino-acid chain: Adenosine 5'-phosphosulfate reductase (241 aa).

The [4Fe-4S] cluster site is built by Cys122, Cys123, Cys205, and Cys208. Catalysis depends on Cys231, which acts as the Nucleophile; cysteine thiosulfonate intermediate.

Belongs to the PAPS reductase family. CysH subfamily. [4Fe-4S] cluster serves as cofactor.

The protein resides in the cytoplasm. The catalysed reaction is [thioredoxin]-disulfide + sulfite + AMP + 2 H(+) = adenosine 5'-phosphosulfate + [thioredoxin]-dithiol. The protein operates within sulfur metabolism; hydrogen sulfide biosynthesis; sulfite from sulfate. Functionally, catalyzes the formation of sulfite from adenosine 5'-phosphosulfate (APS) using thioredoxin as an electron donor. The protein is Adenosine 5'-phosphosulfate reductase of Shouchella clausii (strain KSM-K16) (Alkalihalobacillus clausii).